A 1992-amino-acid chain; its full sequence is E3 ubiquitin-protein ligase TRIP12 (1992 aa).

A compositionally biased stretch (polar residues) spans 1–10; it reads MSNRPNNNPG. Disordered stretches follow at residues 1–398, 797–817, and 938–1080; these read MSNR…DDSE, QRKP…SKKD, and SLLT…ASKD. S2 bears the N-acetylserine mark. Phosphoserine is present on S12. Positions 18–27 are enriched in polar residues; the sequence is RNTAGAQPQD. The span at 48-70 shows a compositional bias: basic and acidic residues; the sequence is DPDRANTSERQKTGQVPKKDNSR. A phosphoserine mark is found at S77, S85, and S100. Residues 78 to 88 are compositionally biased toward polar residues; the sequence is PDYNRTNSPSS. The span at 119-132 shows a compositional bias: polar residues; it reads EQQLKSAQSPSTSK. Composition is skewed to low complexity over residues 154-166 and 175-216; these read SSCV…SEST and PTKL…SSTV. K181 carries the post-translational modification N6-acetyllysine. Polar residues predominate over residues 280 to 290; it reads PGSSKSETSKP. S310 and S312 each carry phosphoserine. The segment covering 326 to 338 has biased composition (polar residues); the sequence is QKTTGSCASTSRR. A compositionally biased stretch (basic and acidic residues) spans 346-358; the sequence is GAAEARRQEKMAD. Composition is skewed to polar residues over residues 360 to 371 and 803 to 812; these read ESNQEAVNSSAA and LANSNTSGYS. Residues 749–836 form the WWE domain; the sequence is MLKKGNAQNT…DPELAKSFIK (88 aa). S942 is subject to Phosphoserine. The span at 948 to 973 shows a compositional bias: low complexity; that stretch reads TNGSGSMGSTTSVSSGTATAATHAAA. S991 and S997 each carry phosphoserine. Over residues 1001-1014 the composition is skewed to basic residues; the sequence is KRKRLPKRGPRRPK. Phosphoserine is present on S1016. A compositionally biased stretch (basic and acidic residues) spans 1017–1026; it reads PPRDDDKVDN. Residues 1029 to 1040 show a composition bias toward low complexity; it reads KSPTTTQSPKSS. A Phosphoserine modification is found at S1030. Over residues 1041-1062 the composition is skewed to polar residues; the sequence is FLASLNPKTWGRLSTQSNSNNI. Phosphoserine occurs at positions 1317, 1322, 1329, and 1376. Residue T1377 is modified to Phosphothreonine. Disordered stretches follow at residues 1407 to 1433 and 1568 to 1587; these read SNKD…NAKK and TNPE…PRLD. K1425 carries the post-translational modification N6-acetyllysine. Residue S1427 is modified to Phosphoserine. Residues 1496–1570 form a K-box region; sequence EIIPTSEFIN…AMQRLLDTNP (75 aa). Residues 1885-1992 enclose the HECT domain; the sequence is PDHGYTHDSR…REGQQSFHLS (108 aa). C1959 functions as the Glycyl thioester intermediate in the catalytic mechanism.

This sequence belongs to the UPL family. K-HECT subfamily. Interacts with MYC; leading to disrupt interaction with isoform p19ARF/ARF of CDKN2A. Interacts with TRADD; leading to disrupt interaction with isoform p19ARF/ARF of CDKN2A. Interacts with SMARCC1; leading to disrupt interaction with SMARCE1.

The protein resides in the nucleus. Its subcellular location is the nucleoplasm. It carries out the reaction S-ubiquitinyl-[E2 ubiquitin-conjugating enzyme]-L-cysteine + [acceptor protein]-L-lysine = [E2 ubiquitin-conjugating enzyme]-L-cysteine + N(6)-ubiquitinyl-[acceptor protein]-L-lysine.. It participates in protein modification; protein ubiquitination. Functionally, E3 ubiquitin-protein ligase involved in ubiquitin fusion degradation (UFD) pathway and regulation of DNA repair. Part of the ubiquitin fusion degradation (UFD) pathway, a process that mediates ubiquitination of protein at their N-terminus, regardless of the presence of lysine residues in target proteins. Acts as a key regulator of DNA damage response by acting as a suppressor of RNF168, an E3 ubiquitin-protein ligase that promotes accumulation of 'Lys-63'-linked histone H2A and H2AX at DNA damage sites, thereby acting as a guard against excessive spreading of ubiquitinated chromatin at damaged chromosomes. In normal cells, mediates ubiquitination and degradation of isoform p19ARF/ARF of CDKN2A, a lysine-less tumor suppressor required for p53/TP53 activation under oncogenic stress. In cancer cells, however, isoform p19ARF/ARF and TRIP12 are located in different cell compartments, preventing isoform p19ARF/ARF ubiquitination and degradation. Does not mediate ubiquitination of isoform p16-INK4a of CDKN2A. Also catalyzes ubiquitination of NAE1 and SMARCE1, leading to their degradation. Ubiquitination and degradation of target proteins is regulated by interaction with proteins such as MYC, TRADD or SMARCC1, which disrupt the interaction between TRIP12 and target proteins. Mediates ubiquitination of ASXL1: following binding to N(6)-methyladenosine methylated DNA, ASXL1 is ubiquitinated by TRIP12, leading to its degradation and subsequent inactivation of the PR-DUB complex. The polypeptide is E3 ubiquitin-protein ligase TRIP12 (TRIP12) (Homo sapiens (Human)).